The following is a 197-amino-acid chain: Probable GTP-binding protein EngB (197 aa).

An EngB-type G domain is found at 2-186 (KVKEVIFAGR…KRDLKQYLLS (185 aa)). GTP-binding positions include 10–17 (GRSNVGKS), 35–39 (GTTIR), 52–55 (DLPG), 132–135 (NKMD), and 166–168 (VCA). Residues Ser-17 and Thr-37 each contribute to the Mg(2+) site.

Belongs to the TRAFAC class TrmE-Era-EngA-EngB-Septin-like GTPase superfamily. EngB GTPase family. It depends on Mg(2+) as a cofactor.

In terms of biological role, necessary for normal cell division and for the maintenance of normal septation. The protein is Probable GTP-binding protein EngB of Archaeoglobus fulgidus (strain ATCC 49558 / DSM 4304 / JCM 9628 / NBRC 100126 / VC-16).